The primary structure comprises 183 residues: Probable GTP-binding protein EngB (183 aa).

The 166-residue stretch at D18 to L183 folds into the EngB-type G domain. Residues G26–S33, G52–L56, D70–G73, T137–D140, and V166–S168 each bind GTP. S33 and T54 together coordinate Mg(2+).

It belongs to the TRAFAC class TrmE-Era-EngA-EngB-Septin-like GTPase superfamily. EngB GTPase family. Mg(2+) serves as cofactor.

Necessary for normal cell division and for the maintenance of normal septation. The polypeptide is Probable GTP-binding protein EngB (Metamycoplasma arthritidis (strain 158L3-1) (Mycoplasma arthritidis)).